The chain runs to 350 residues: Phenylalanine--tRNA ligase alpha subunit (350 aa).

Position 271 (Glu-271) interacts with Mg(2+).

Belongs to the class-II aminoacyl-tRNA synthetase family. Phe-tRNA synthetase alpha subunit type 1 subfamily. Tetramer of two alpha and two beta subunits. Mg(2+) is required as a cofactor.

It localises to the cytoplasm. The catalysed reaction is tRNA(Phe) + L-phenylalanine + ATP = L-phenylalanyl-tRNA(Phe) + AMP + diphosphate + H(+). The sequence is that of Phenylalanine--tRNA ligase alpha subunit from Delftia acidovorans (strain DSM 14801 / SPH-1).